We begin with the raw amino-acid sequence, 82 residues long: Conotoxin Cal30 (82 aa).

Positions 1–19 (MEKLIILLLVASLLVTTDS) are cleaved as a signal peptide.

In terms of processing, may contain 5 disulfide bonds. Expressed by the venom duct.

Its subcellular location is the secreted. Its function is as follows. Probable neurotoxin. The sequence is that of Conotoxin Cal30 from Californiconus californicus (California cone).